The primary structure comprises 92 residues: C-C motif chemokine 4 (92 aa).

The first 23 residues, methionine 1–serine 23, serve as a signal peptide directing secretion. 2 disulfides stabilise this stretch: cysteine 34-cysteine 58 and cysteine 35-cysteine 74.

Belongs to the intercrine beta (chemokine CC) family. In terms of assembly, homodimer.

The protein resides in the secreted. Its function is as follows. Monokine with inflammatory and chemokinetic properties. The polypeptide is C-C motif chemokine 4 (Ccl4) (Rattus norvegicus (Rat)).